A 367-amino-acid polypeptide reads, in one-letter code: Glutamate 5-kinase (367 aa).

Lys17 contacts ATP. Substrate is bound by residues Ser57, Asp144, and Asn156. ATP contacts are provided by residues 176 to 177 (SD) and 217 to 223 (TGGMVSK). The PUA domain maps to 279–357 (VGSLTLDEGA…SELPCELRRP (79 aa)).

This sequence belongs to the glutamate 5-kinase family.

Its subcellular location is the cytoplasm. It catalyses the reaction L-glutamate + ATP = L-glutamyl 5-phosphate + ADP. Its pathway is amino-acid biosynthesis; L-proline biosynthesis; L-glutamate 5-semialdehyde from L-glutamate: step 1/2. Catalyzes the transfer of a phosphate group to glutamate to form L-glutamate 5-phosphate. The protein is Glutamate 5-kinase of Mycobacterium leprae (strain Br4923).